The following is a 1037-amino-acid chain: Receptor kinase-like protein Xa21 (1037 aa).

An N-terminal signal peptide occupies residues 1-24; the sequence is MARSPTSVMISSLLLLLLIGPASS. At 25–665 the chain is on the extracellular side; the sequence is DDAAAAAAAR…LLENRKHFPV (641 aa). 3 N-linked (GlcNAc...) asparagine glycosylation sites follow: Asn66, Asn101, and Asn112. 11 LRR repeats span residues 89–112, 113–137, 138–161, 163–185, 187–210, 211–234, 236–259, 260–283, 285–308, 310–331, and 333–355; these read PHRV…SLGN, LSFL…LSRL, SRLQ…IGAC, KLTS…IGAS, KHLS…LGNL, TSLQ…LGQL, SSLL…IWNL, SSLR…AFKT, HLLE…VANA, HLTQ…GFGR, and RNLT…DWGF. Asn209 carries an N-linked (GlcNAc...) asparagine glycan. N-linked (GlcNAc...) asparagine glycosylation is found at Asn247 and Asn258. Asn307 carries an N-linked (GlcNAc...) asparagine glycan. Asn334, Asn361, and Asn385 each carry an N-linked (GlcNAc...) asparagine glycan. 11 LRR repeats span residues 362 to 385, 387 to 411, 412 to 435, 437 to 459, 460 to 482, 483 to 507, 509 to 532, 533 to 556, 557 to 580, 581 to 604, and 606 to 629; these read CSKL…SFSN, STSL…IGNL, IGLQ…LGRL, NLGI…IGNL, TELN…TLSN, LTNL…LFNI, TLSI…IGHL, KNLV…LGDC, QLLR…LGQL, KGLE…LADI, and MLHS…AFAD. N-linked (GlcNAc...) asparagine glycosylation is found at Asn447, Asn458, Asn482, Asn495, and Asn515. 2 N-linked (GlcNAc...) asparagine glycosylation sites follow: Asn592 and Asn611. The chain crosses the membrane as a helical span at residues 666 to 686; that stretch reads LPISVSLVAALAILSSLYLLI. Over 687–1037 the chain is Cytoplasmic; that stretch reads TWHKRTKKGA…PVCEGASLEF (351 aa). Positions 689 to 694 match the Nuclear localization signal motif; sequence HKRTKK. Ser698 carries the phosphoserine modification. Residue Thr700 is modified to Phosphothreonine. Phosphoserine is present on Ser701. Thr717 carries the phosphothreonine modification. One can recognise a Protein kinase domain in the interval 720–1019; it reads FAPTNLLGSG…GDIIDELNAI (300 aa). Residues 726-734 and Lys748 contribute to the ATP site; that span reads LGSGSFGSV. The active-site Proton acceptor is Asp854.

Belongs to the protein kinase superfamily. Ser/Thr protein kinase family. As to quaternary structure, interacts with WRKY62/XB10 in the nucleus. Interacts with SERK2. It depends on Mn(2+) as a cofactor. Mg(2+) serves as cofactor. Post-translationally, undergoes protein cleavage upon X.oryzae pv. oryzae protein Ax21 detection, thus releasing the processed protein kinase Xa21 chain. In terms of processing, autophosphorylated on serine and threonine residues; these phosphorylation prevents proteolytic degradation.

It is found in the cell membrane. Its subcellular location is the endoplasmic reticulum membrane. It localises to the nucleus. It catalyses the reaction L-seryl-[protein] + ATP = O-phospho-L-seryl-[protein] + ADP + H(+). The catalysed reaction is L-threonyl-[protein] + ATP = O-phospho-L-threonyl-[protein] + ADP + H(+). Receptor kinase that detects X.oryzae pv. oryzae protein Ax21 to promote innate immunity. Following X.oryzae pv. oryzae protein Ax21 detection, undergoes cleavage, releasing the processed protein kinase Xa21 chain. Its function is as follows. The processed protein kinase Xa21 chain released by protein cleavage after X.oryzae pv. oryzae protein Ax21 detection translocates into the nucleus where it can bind and regulate WRKY62, a transcription factor. Confers resistance to the bacterial pathogen X.oryzae pv. oryzae (Xoo). The protein is Receptor kinase-like protein Xa21 of Oryza sativa subsp. japonica (Rice).